The following is a 928-amino-acid chain: Diacylglycerol kinase zeta (928 aa).

Basic and acidic residues predominate over residues Met1–Asp14. 2 disordered regions span residues Met1–Pro46 and Lys59–Gln82. Residues Ser15 to Gly24 show a composition bias toward low complexity. Basic and acidic residues predominate over residues Ser25–Pro37. Phorbol-ester/DAG-type zinc fingers lie at residues His98 to Cys152 and His172 to Cys230. A disordered region spans residues Pro251–Trp280. Residues Ala257–Lys272 are compositionally biased toward basic residues. The segment at Lys259–Lys273 is MARCKS homology. The mediates interaction with RASGRP1 stretch occupies residues Gly278–Leu416. One can recognise a DAGKc domain in the interval Pro291 to Pro425. The Nuclear export signal motif lies at Leu361–Leu369. At Ser705 the chain carries Phosphoserine. The segment at Ala759–Pro788 is disordered. Positions Leu763–Pro777 are enriched in pro residues. Ser781 carries the post-translational modification Phosphoserine. ANK repeat units follow at residues Gln822 to Asp852 and Asn857 to Lys886. The PDZ-binding motif lies at Gln924–Val928.

The protein belongs to the eukaryotic diacylglycerol kinase family. As to quaternary structure, interacts (via PDZ-binding motif) with the PDZ domain of the syntrophin SNTG1 and that of SNX27. Interacts with IRS1 in the absence of insulin; insulin stimulation decreases this interaction. Found in a ternary complex with IRS1 and PIP5K1A in the absence of insulin. Interacts with PIP5K1A. In terms of assembly, forms a signaling complex with RASGRP1 and HRAS. In terms of processing, phosphorylation of the MARCKS homology domain by PKC reduces nuclear accumulation of DGK-zeta. As to expression, highest levels in brain, and substantial levels in skeletal muscle, heart, and pancreas. Predominantly expressed in muscle.

Its subcellular location is the nucleus. The protein resides in the cytoplasm. The protein localises to the cytosol. It localises to the cell membrane. It is found in the cell projection. Its subcellular location is the lamellipodium. It carries out the reaction a 1,2-diacyl-sn-glycerol + ATP = a 1,2-diacyl-sn-glycero-3-phosphate + ADP + H(+). The enzyme catalyses a 1-O-alkyl-sn-glycerol + ATP = a 1-O-alkyl-sn-glycero-3-phosphate + ADP + H(+). It catalyses the reaction 1-O-alkyl-2-acyl-sn-glycerol + ATP = 1-O-alkyl-2-acyl-sn-glycero-3-phosphate + ADP + H(+). The catalysed reaction is 1,2-didecanoyl-sn-glycerol + ATP = 1,2-didecanoyl-sn-glycero-3-phosphate + ADP + H(+). It carries out the reaction 1,2-ditetradecanoyl-sn-glycerol + ATP = 1,2-ditetradecanoyl-sn-glycero-3-phosphate + ADP + H(+). The enzyme catalyses 1-hexadecanoyl-2-(9Z-octadecenoyl)-sn-glycerol + ATP = 1-hexadecanoyl-2-(9Z-octadecenoyl)-sn-glycero-3-phosphate + ADP + H(+). It catalyses the reaction 1-hexadecanoyl-2-(5Z,8Z,11Z,14Z-eicosatetraenoyl)-sn-glycerol + ATP = 1-hexadecanoyl-2-(5Z,8Z,11Z,14Z-eicosatetraenoyl)-sn-glycero-3-phosphate + ADP + H(+). The catalysed reaction is 1-octadecanoyl-2-(9Z-octadecenoyl)-sn-glycerol + ATP = 1-octadecanoyl-2-(9Z-octadecenoyl)-sn-glycero-3-phosphate + ADP + H(+). It carries out the reaction 1-octadecanoyl-2-(5Z,8Z,11Z,14Z-eicosatetraenoyl)-sn-glycerol + ATP = 1-octadecanoyl-2-(5Z,8Z,11Z,14Z-eicosatetraenoyl)-sn-glycero-3-phosphate + ADP + H(+). The enzyme catalyses 1-octadecanoyl-2-(4Z,7Z,10Z,13Z,16Z,19Z-docosahexaenoyl)-sn-glycerol + ATP = 1-octadecanoyl-2-(4Z,7Z,10Z,13Z,16Z,19Z-docosahexaenoyl)-sn-glycero-3-phosphate + ADP + H(+). It catalyses the reaction 1,2-di-(9Z-octadecenoyl)-sn-glycerol + ATP = 1,2-di-(9Z-octadecenoyl)-sn-glycero-3-phosphate + ADP + H(+). The catalysed reaction is 1-(9Z-octadecenoyl)-2-hexadecanoyl-sn-glycerol + ATP = 1-(9Z)-octadecenoyl-2-hexadecanoyl-sn-glycero-3-phosphate + ADP + H(+). It carries out the reaction 1-eicosanoyl-2-(5Z,8Z,11Z,14Z)-eicosatetraenoyl-sn-glycerol + ATP = 1-eicosanoyl-2-(5Z,8Z,11Z,14Z)-eicosatetraenoyl-sn-glycero-3-phosphate + ADP + H(+). The enzyme catalyses 1,2-di-(5Z,8Z,11Z,14Z)-eicosatetraenoyl-sn-glycerol + ATP = 1,2-di-(5Z,8Z,11Z,14Z)-eicosatetraenoyl-sn-glycero-3-phosphate + ADP + H(+). It catalyses the reaction 1-O-hexadecyl-2-acetyl-sn-glycerol + ATP = 1-O-hexadecyl-2-acetyl-sn-glycero-3-phosphate + ADP + H(+). The catalysed reaction is 1-O-hexadecyl-2-(5Z,8Z,11Z,14Z-eicosatetraenoyl)-sn-glycerol + ATP = 1-O-hexadecyl-2-(5Z,8Z,11Z,14Z-eicosatetraenoyl)-sn-glycero-3-phosphate + ADP + H(+). It carries out the reaction 1-O-hexadecyl-2-(9Z-octadecenoyl)-sn-glycerol + ATP = 1-O-hexadecyl-2-(9Z-octadecenoyl)-sn-glycero-3-phosphate + ADP + H(+). The enzyme catalyses 1-O-hexadecyl-sn-glycerol + ATP = 1-O-hexadecyl-sn-glycero-3-phosphate + ADP + H(+). It functions in the pathway lipid metabolism; glycerolipid metabolism. Its activity is regulated as follows. Activated by 1,2-diacyl-sn-glycero-3-phosphate/phosphatidic acid irrespective of its acyl chain composition. Its function is as follows. Diacylglycerol kinase that converts diacylglycerol/DAG into phosphatidic acid/phosphatidate/PA and regulates the respective levels of these two bioactive lipids. Thereby, acts as a central switch between the signaling pathways activated by these second messengers with different cellular targets and opposite effects in numerous biological processes. Also plays an important role in the biosynthesis of complex lipids. Does not exhibit an acyl chain-dependent substrate specificity among diacylglycerol species. Can also phosphorylate 1-alkyl-2-acylglycerol in vitro but less efficiently and with a preference for alkylacylglycerols containing an arachidonoyl group. The biological processes it is involved in include T cell activation since it negatively regulates T-cell receptor signaling which is in part mediated by diacylglycerol. By generating phosphatidic acid, stimulates PIP5KIA activity which regulates actin polymerization. Through the same mechanism could also positively regulate insulin-induced translocation of SLC2A4 to the cell membrane. In terms of biological role, regulates RASGRP1 activity. Does not regulate RASGRP1 activity. The protein is Diacylglycerol kinase zeta of Homo sapiens (Human).